The sequence spans 353 residues: Colistin resistance protein EmrA (353 aa).

Residues 21–41 (WGVFSVLLLFLVAGILYYFFV) traverse the membrane as a helical segment. Residues 132–204 (VVAAQADLAR…QASRAQLLAD (73 aa)) adopt a coiled-coil conformation.

This sequence belongs to the membrane fusion protein (MFP) (TC 8.A.1) family.

The protein localises to the cell inner membrane. Functionally, probably part of an efflux pump system that contributes to adaptation to osmotic stress and resistance to colistin. In Acinetobacter baumannii (strain ATCC 17978 / DSM 105126 / CIP 53.77 / LMG 1025 / NCDC KC755 / 5377), this protein is Colistin resistance protein EmrA.